Here is a 352-residue protein sequence, read N- to C-terminus: Photosystem II protein D1 (352 aa).

Threonine 2 carries the post-translational modification N-acetylthreonine. The residue at position 2 (threonine 2) is a Phosphothreonine. Helical transmembrane passes span tyrosine 29–serine 46, histidine 118–leucine 133, and tryptophan 142–alanine 156. Chlorophyll a is bound at residue histidine 118. Residue tyrosine 126 participates in pheophytin a binding. [CaMn4O5] cluster contacts are provided by aspartate 170 and glutamate 189. The helical transmembrane segment at phenylalanine 197 to leucine 218 threads the bilayer. Histidine 198 serves as a coordination point for chlorophyll a. A quinone-binding positions include histidine 215 and serine 264–phenylalanine 265. Residue histidine 215 coordinates Fe cation. Histidine 272 serves as a coordination point for Fe cation. Residues phenylalanine 274–leucine 288 traverse the membrane as a helical segment. The [CaMn4O5] cluster site is built by histidine 332, glutamate 333, aspartate 342, and alanine 344. Positions serine 345–alanine 352 are excised as a propeptide.

Belongs to the reaction center PufL/M/PsbA/D family. PSII is composed of 1 copy each of membrane proteins PsbA, PsbB, PsbC, PsbD, PsbE, PsbF, PsbH, PsbI, PsbJ, PsbK, PsbL, PsbM, PsbT, PsbX, PsbY, PsbZ, Psb30/Ycf12, at least 3 peripheral proteins of the oxygen-evolving complex and a large number of cofactors. It forms dimeric complexes. The D1/D2 heterodimer binds P680, chlorophylls that are the primary electron donor of PSII, and subsequent electron acceptors. It shares a non-heme iron and each subunit binds pheophytin, quinone, additional chlorophylls, carotenoids and lipids. D1 provides most of the ligands for the Mn4-Ca-O5 cluster of the oxygen-evolving complex (OEC). There is also a Cl(-1) ion associated with D1 and D2, which is required for oxygen evolution. The PSII complex binds additional chlorophylls, carotenoids and specific lipids. is required as a cofactor. Post-translationally, tyr-161 forms a radical intermediate that is referred to as redox-active TyrZ, YZ or Y-Z. In terms of processing, C-terminally processed by CTPA; processing is essential to allow assembly of the oxygen-evolving complex and thus photosynthetic growth.

The protein resides in the plastid. Its subcellular location is the chloroplast thylakoid membrane. The catalysed reaction is 2 a plastoquinone + 4 hnu + 2 H2O = 2 a plastoquinol + O2. Functionally, photosystem II (PSII) is a light-driven water:plastoquinone oxidoreductase that uses light energy to abstract electrons from H(2)O, generating O(2) and a proton gradient subsequently used for ATP formation. It consists of a core antenna complex that captures photons, and an electron transfer chain that converts photonic excitation into a charge separation. The D1/D2 (PsbA/PsbD) reaction center heterodimer binds P680, the primary electron donor of PSII as well as several subsequent electron acceptors. The polypeptide is Photosystem II protein D1 (Chlorella ellipsoidea).